An 816-amino-acid chain; its full sequence is Chitin synthase 1 (816 aa).

The interval 1–21 is disordered; it reads MLSQGEILRNPSRTRLQRPPK. The Cytoplasmic segment spans residues 1–32; the sequence is MLSQGEILRNPSRTRLQRPPKSRSERKGWWYR. The helical transmembrane segment at 33 to 53 threads the bilayer; the sequence is VTIFLTCLIPNFMLRCFGMTT. Topologically, residues 54-63 are extracellular; it reads PEVQHAWREK. The helical transmembrane segment at 64–84 threads the bilayer; the sequence is VALCICIFFCWIILGFTTYGM. At 85-240 the chain is on the cytoplasmic side; it reads NTIICKGSNQ…TPGCLLADTM (156 aa). Residues 241-261 traverse the membrane as a helical segment; that stretch reads FWITTISIFGLIITKFLLGFF. The Extracellular segment spans residues 262–697; it reads YSWYAKRRPK…QLVVVMELFG (436 aa). N-linked (GlcNAc...) asparagine glycans are attached at residues Asn319 and Asn664. Residues 698–718 traverse the membrane as a helical segment; that stretch reads TLVLPAAIIFTFVMIAVSILI. At 719 to 720 the chain is on the cytoplasmic side; sequence EP. A helical transmembrane segment spans residues 721–741; sequence AWVPLIMLVGIFGLPAVLILI. Residues 742-745 lie on the Extracellular side of the membrane; it reads TTME. Residues 746–766 form a helical membrane-spanning segment; sequence IQYVFWCLVYILSIPIWNFVL. Residues 767-816 lie on the Cytoplasmic side of the membrane; it reads PTYAFWHFDNFSWGDTRKVDGEGKEDEEGEFDHTKIRIRELEEFLSEANK.

Belongs to the chitin synthase family. Class IV subfamily.

The protein localises to the cell membrane. It catalyses the reaction [(1-&gt;4)-N-acetyl-beta-D-glucosaminyl](n) + UDP-N-acetyl-alpha-D-glucosamine = [(1-&gt;4)-N-acetyl-beta-D-glucosaminyl](n+1) + UDP + H(+). Polymerizes chitin, a structural polymer of the cell wall and septum, by transferring the sugar moiety of UDP-GlcNAc to the non-reducing end of the growing chitin polymer. This is Chitin synthase 1 (CHS1) from Encephalitozoon cuniculi (strain GB-M1) (Microsporidian parasite).